We begin with the raw amino-acid sequence, 105 residues long: Large ribosomal subunit protein bL21 (105 aa).

It belongs to the bacterial ribosomal protein bL21 family. Part of the 50S ribosomal subunit. Contacts protein L20.

Its function is as follows. This protein binds to 23S rRNA in the presence of protein L20. This chain is Large ribosomal subunit protein bL21, found in Natranaerobius thermophilus (strain ATCC BAA-1301 / DSM 18059 / JW/NM-WN-LF).